A 301-amino-acid polypeptide reads, in one-letter code: Immediate early response gene 5-like protein (301 aa).

The protein belongs to the IER family.

The protein is Immediate early response gene 5-like protein (ier5l) of Danio rerio (Zebrafish).